The following is a 557-amino-acid chain: Formate--tetrahydrofolate ligase (557 aa).

67 to 74 (TPAGEGKS) contributes to the ATP binding site.

Belongs to the formate--tetrahydrofolate ligase family.

The enzyme catalyses (6S)-5,6,7,8-tetrahydrofolate + formate + ATP = (6R)-10-formyltetrahydrofolate + ADP + phosphate. Its pathway is one-carbon metabolism; tetrahydrofolate interconversion. The protein is Formate--tetrahydrofolate ligase of Lacticaseibacillus paracasei (strain ATCC 334 / BCRC 17002 / CCUG 31169 / CIP 107868 / KCTC 3260 / NRRL B-441) (Lactobacillus paracasei).